A 224-amino-acid polypeptide reads, in one-letter code: Octanoyltransferase (224 aa).

The region spanning 38 to 213 (AETTDEVWLL…QFVRAAGFQS (176 aa)) is the BPL/LPL catalytic domain. Substrate is bound by residues 77 to 84 (RGGQVTYH), 144 to 146 (SLG), and 157 to 159 (GLA). Residue C175 is the Acyl-thioester intermediate of the active site.

Belongs to the LipB family.

The protein resides in the cytoplasm. It catalyses the reaction octanoyl-[ACP] + L-lysyl-[protein] = N(6)-octanoyl-L-lysyl-[protein] + holo-[ACP] + H(+). The protein operates within protein modification; protein lipoylation via endogenous pathway; protein N(6)-(lipoyl)lysine from octanoyl-[acyl-carrier-protein]: step 1/2. Its function is as follows. Catalyzes the transfer of endogenously produced octanoic acid from octanoyl-acyl-carrier-protein onto the lipoyl domains of lipoate-dependent enzymes. Lipoyl-ACP can also act as a substrate although octanoyl-ACP is likely to be the physiological substrate. The protein is Octanoyltransferase of Hahella chejuensis (strain KCTC 2396).